Reading from the N-terminus, the 483-residue chain is Shaker-related potassium channel tsha2 (483 aa).

Topologically, residues 1–165 (MTVVSCEIQD…YPESSGPARM (165 aa)) are cytoplasmic. The helical transmembrane segment at 166–186 (IAVVSVSVIVISIVIFCLETL) threads the bilayer. Residues 187-220 (PQFREDTSANLPLSNHHTTNGTTLHKKPNLFTDP) lie on the Extracellular side of the membrane. The chain crosses the membrane as a helical span at residues 221-241 (FFMVETLCIVWFSFEFLVRFL). Residues 242–252 (SCPSKPAFFKN) lie on the Cytoplasmic side of the membrane. Cys243 is lipidated: S-palmitoyl cysteine. The chain crosses the membrane as a helical span at residues 253-273 (AMNSIDILAIAPYFITLGLEL). The Extracellular portion of the chain corresponds to 274–324 (AEQQEAGSEQAMSLAILRVIRLVRVFRIFKLSRHSKGLQILGQTLHASISE). The helical; Voltage-sensor transmembrane segment at 325–345 (LGLLIFFLLIGVILFSSAVYF) threads the bilayer. Topologically, residues 346 to 353 (AEADDPES) are cytoplasmic. A helical membrane pass occupies residues 354–374 (GFSSIPAAFWWAVVSMTTVGY). A Selectivity filter motif is present at residues 371–376 (TVGYGD). The Extracellular segment spans residues 375-385 (GDMCPVTIGGK). Residues 386-406 (IVGSMCAIAGVLTIALPVPVI) traverse the membrane as a helical segment. Topologically, residues 407 to 483 (VSNFNYFYHR…EHYTGKLTDV (77 aa)) are cytoplasmic. At Tyr426 the chain carries Phosphotyrosine. Thr430 carries the post-translational modification Phosphothreonine. The span at 440 to 452 (EFKSTSDSRQSLT) shows a compositional bias: polar residues. Residues 440–459 (EFKSTSDSRQSLTKSEDTEE) form a disordered region. The short motif at 481–483 (TDV) is the PDZ-binding element.

Belongs to the potassium channel family. A (Shaker) (TC 1.A.1.2) subfamily. In terms of assembly, heterotetramer of potassium channel proteins. Binds PDZ domains of dlg1, dlg2 and dlg4. In terms of tissue distribution, expressed in oligodendrocytes and astrocytes.

The protein localises to the membrane. Mediates the voltage-dependent potassium ion permeability of excitable membranes. Assuming opened or closed conformations in response to the voltage difference across the membrane, the protein forms a potassium-selective channel through which potassium ions may pass in accordance with their electrochemical gradient. The sequence is that of Shaker-related potassium channel tsha2 from Oncorhynchus mykiss (Rainbow trout).